We begin with the raw amino-acid sequence, 456 residues long: Signal transduction histidine-protein kinase ArlS (456 aa).

2 helical membrane passes run 13–33 (LITT…IIFF) and 157–177 (IVAL…SYIF). The region spanning 179-232 (SQITKPIVTMSNKMNQIRRDGFQNKLELTTNYEETDNLIDTFNEMMYQIEESFN) is the HAMP domain. Residues 240–456 (DASHELRTPL…TFKISFPVLN (217 aa)) enclose the Histidine kinase domain. Position 243 is a phosphohistidine; by autocatalysis (His-243).

In terms of processing, autophosphorylated.

It localises to the cell membrane. It carries out the reaction ATP + protein L-histidine = ADP + protein N-phospho-L-histidine.. In terms of biological role, member of the two-component regulatory system ArlS/ArlR. ArlS probably functions as a sensor protein kinase which is autophosphorylated at a histidine residue and transfers its phosphate group to ArlR. This is Signal transduction histidine-protein kinase ArlS (arlS) from Staphylococcus epidermidis (strain ATCC 12228 / FDA PCI 1200).